A 123-amino-acid chain; its full sequence is Large ribosomal subunit protein bL12 (123 aa).

This sequence belongs to the bacterial ribosomal protein bL12 family. In terms of assembly, homodimer. Part of the ribosomal stalk of the 50S ribosomal subunit. Forms a multimeric L10(L12)X complex, where L10 forms an elongated spine to which 2 to 4 L12 dimers bind in a sequential fashion. Binds GTP-bound translation factors.

Forms part of the ribosomal stalk which helps the ribosome interact with GTP-bound translation factors. Is thus essential for accurate translation. The chain is Large ribosomal subunit protein bL12 from Bartonella henselae (strain ATCC 49882 / DSM 28221 / CCUG 30454 / Houston 1) (Rochalimaea henselae).